The sequence spans 770 residues: Signal transducer and activator of transcription 3 (770 aa).

N-acetylalanine is present on Ala2. Lys49 and Lys87 each carry N6-acetyllysine. The short motif at 150–162 (DVRKRVQDLEQKM) is the Essential for nuclear import element. One can recognise an SH2 domain in the interval 580–670 (WNEGYIMGFI…DATNILVSPL (91 aa)). 3 positions are modified to allysine; alternate: Lys601, Lys615, and Lys631. 3 positions are modified to N6-acetyllysine; alternate: Lys601, Lys615, and Lys631. A Phosphotyrosine; by TYK2 modification is found at Tyr640. At Lys685 the chain carries Allysine; alternate. Lys685 bears the N6-acetyllysine; alternate mark. A Phosphotyrosine modification is found at Pro704. Tyr705 carries the phosphotyrosine; by FER and PTK6 modification. An N6-acetyllysine modification is found at Lys707. Thr714 carries the post-translational modification Phosphothreonine. Ser727 carries the post-translational modification Phosphoserine; by DYRK2, NLK, NEK6, IRAK1, RPS6KA5, ZIPK/DAPK3 and PKC/PRKCE.

Belongs to the transcription factor STAT family. Forms a homodimer or a heterodimer with a related family member (at least STAT1). Component of a promoter-binding complex composed of STAT3, NFATC3 and NFATC4; complex formation is enhanced by calcineurin. Interacts with IL31RA, NCOA1, PELP1, SIPAR, SOCS7, STATIP1 and TMF1. Interacts with IL23R in presence of IL23. Interacts (via SH2 domain) with NLK. Interacts with ARL2BP; the interaction is enhanced by LIF and JAK1 expression. Interacts with KPNA4 and KPNA5; KPNA4 may be the primary mediator of nuclear import. Interacts with CAV2; the interaction is increased on insulin-induced tyrosine phosphorylation of CAV2 and leads to STAT3 activation. Interacts with ARL2BP; interaction is enhanced with ARL2. Interacts with NEK6. Binds to CDK9 when activated and nuclear. Interacts with BMX. Interacts with ZIPK/DAPK3. Interacts with PIAS3; the interaction occurs on stimulation by IL6, CNTF or OSM and inhibits the DNA binding activity of STAT3. In prostate cancer cells, interacts with PRKCE and promotes DNA binding activity of STAT3. Interacts with STMN3, antagonizing its microtubule-destabilizing activity. Interacts with the 'Lys-129' acetylated form of BIRC5/survivin. Interacts with FER. Interacts (via SH2 domain) with EIF2AK2/PKR (via the kinase catalytic domain). Interacts with INPP5F; the interaction is independent of STAT3 Tyr-705 phosphorylation status. Interacts with FGFR4. Interacts with OCIAD1. Interacts with OCIAD2. Interacts (unphosphorylated or phosphorylated at Ser-727) with PHB1. Interacts and may form heterodimers with NHLH1. Found in a complex with SLC39A6, SLC39A10 and with the 'Ser-727' phosphorylated form of STAT3 throughout mitosis. Interacts (when phosphorylated at Tyr-705) with CD274/PD-L1; promoting nuclear translocation of CD274/PD-L1. Interacts (when acetylated) with EP300 (via bromo domain); interaction takes place following STAT3 acetylation by EP300 and promotes enhanceosome assembly. Interacts (when acetylated) with BRD2 (via bromo domain); interaction promotes STAT3 recruitment to chromatin and T-helper Th17 cell differentiation. Interacts with FAM220A/SIPAR; the interaction occurs in both the nucleus and the cytoplasm, is enhanced by IL6 and promotes STAT3 dephosphorylation. Interacts in both unphosphorylated and phosphorylated forms with FAM220A but interacts preferentially in the phosphorylated form in the nucleus. Interacts with PTPN2; the interaction is promoted by FAM220A and leads to STAT3 dephosphorylation which negatively regulates STAT3 transcriptional activator activity. As to quaternary structure, (Microbial infection) Interacts with HCV core protein. In terms of assembly, (Microbial infection) Interacts with S.typhimurium SarA. (Microbial infection) Interacts with human cytomegalovirus (HHV-5) immediate early protein IE1; this interaction leads to STAT3 nuclear accumulation and disruption of IL6-induced STAT3 phosphorylation. Tyrosine phosphorylated upon stimulation with EGF. Tyrosine phosphorylated in response to constitutively activated FGFR1, FGFR2, FGFR3 and FGFR4. Activated through tyrosine phosphorylation by BMX. Tyrosine phosphorylated in response to IL6, IL11, LIF, CNTF, KITLG/SCF, CSF1, EGF, PDGF, IFN-alpha, LEP and OSM. Activated KIT promotes phosphorylation on tyrosine residues and subsequent translocation to the nucleus. Phosphorylated on serine upon DNA damage, probably by ATM or ATR. Serine phosphorylation is important for the formation of stable DNA-binding STAT3 homodimers and maximal transcriptional activity. ARL2BP may participate in keeping the phosphorylated state of STAT3 within the nucleus. Upon LPS challenge, phosphorylated within the nucleus by IRAK1. Upon erythropoietin treatment, phosphorylated on Ser-727 by RPS6KA5. Dephosphorylation on tyrosine residues by PTPN2 negatively regulates IL6/interleukin-6 signaling. Phosphorylation at Tyr-705 by PTK6, isoform M2 of PKM (PKM2) or FER leads to an increase of its transcriptional activity. Phosphorylation at Tyr-705 is increased in the presence of calcineurin. Phosphorylation at Tyr-640 by TYK2 negatively regulates transcriptional activity. In terms of processing, acetylated on lysine residues by EP300/p300, promoting its activation. Acetylation at Lys-49 and Lys-87 by EP300/p300 promotes its activation. Acetylation at Lys-87 by EP300/p300 promotes its association with BRD2 and recruitment to chromatin. Deacetylated at Lys-49 and Lys-87 by HDAC1. Acetylation at Lys-685 by EP300/p300 promotes its homodimerization and activation. Deacetylated at Lys-685 by HDAC3. Acetylated on lysine residues by CREBBP. Deacetylation by LOXL3 leads to disrupt STAT3 dimerization and inhibit STAT3 transcription activity. Oxidation of lysine residues to allysine on STAT3 preferentially takes place on lysine residues that are acetylated. Post-translationally, some lysine residues are oxidized to allysine by LOXL3, leading to disrupt STAT3 dimerization and inhibit STAT3 transcription activity. Oxidation of lysine residues to allysine on STAT3 preferentially takes place on lysine residues that are acetylated. (Microbial infection) Phosphorylated on Tyr-705 in the presence of S.typhimurium SarA. As to expression, heart, brain, placenta, lung, liver, skeletal muscle, kidney and pancreas. Expressed in naive CD4(+) T cells as well as T-helper Th17, Th1 and Th2 cells.

Its subcellular location is the cytoplasm. The protein localises to the nucleus. Functionally, signal transducer and transcription activator that mediates cellular responses to interleukins, KITLG/SCF, LEP and other growth factors. Once activated, recruits coactivators, such as NCOA1 or MED1, to the promoter region of the target gene. May mediate cellular responses to activated FGFR1, FGFR2, FGFR3 and FGFR4. Upon activation of IL6ST/gp130 signaling by interleukin-6 (IL6), binds to the IL6-responsive elements identified in the promoters of various acute-phase protein genes. Activated by IL31 through IL31RA. Acts as a regulator of inflammatory response by regulating differentiation of naive CD4(+) T-cells into T-helper Th17 or regulatory T-cells (Treg): acetylation promotes its transcription activity and cell differentiation while deacetylation and oxidation of lysine residues by LOXL3 inhibits differentiation. Involved in cell cycle regulation by inducing the expression of key genes for the progression from G1 to S phase, such as CCND1. Mediates the effects of LEP on melanocortin production, body energy homeostasis and lactation. May play an apoptotic role by transctivating BIRC5 expression under LEP activation. Cytoplasmic STAT3 represses macroautophagy by inhibiting EIF2AK2/PKR activity. Plays a crucial role in basal beta cell functions, such as regulation of insulin secretion. Following JAK/STAT signaling activation and as part of a complex with NFATC3 and NFATC4, binds to the alpha-beta E4 promoter region of CRYAB and activates transcription in cardiomyocytes. The polypeptide is Signal transducer and activator of transcription 3 (Homo sapiens (Human)).